Here is a 330-residue protein sequence, read N- to C-terminus: 4-hydroxythreonine-4-phosphate dehydrogenase (330 aa).

Substrate-binding residues include His133 and Thr134. A divalent metal cation contacts are provided by His163, His208, and His263. Substrate contacts are provided by Lys271, Asn280, and Arg289.

Belongs to the PdxA family. In terms of assembly, homodimer. Zn(2+) serves as cofactor. The cofactor is Mg(2+). Requires Co(2+) as cofactor.

The protein localises to the cytoplasm. It catalyses the reaction 4-(phosphooxy)-L-threonine + NAD(+) = 3-amino-2-oxopropyl phosphate + CO2 + NADH. The protein operates within cofactor biosynthesis; pyridoxine 5'-phosphate biosynthesis; pyridoxine 5'-phosphate from D-erythrose 4-phosphate: step 4/5. Its function is as follows. Catalyzes the NAD(P)-dependent oxidation of 4-(phosphooxy)-L-threonine (HTP) into 2-amino-3-oxo-4-(phosphooxy)butyric acid which spontaneously decarboxylates to form 3-amino-2-oxopropyl phosphate (AHAP). The sequence is that of 4-hydroxythreonine-4-phosphate dehydrogenase from Azoarcus sp. (strain BH72).